Consider the following 635-residue polypeptide: Frizzled and smoothened-like protein C (635 aa).

Residues 1 to 20 form the signal peptide; that stretch reads MKFKLIIFIIIIYIIKILKS. Over 21–244 the chain is Extracellular; sequence EILNEFGYGL…NKWVQMYKMS (224 aa). Residues 32–166 form the FZ domain; it reads DENLKCLSFI…LTKYGYTENN (135 aa). Intrachain disulfides connect C37–C108 and C50–C101. Residues N65, N141, N156, N185, and N203 are each glycosylated (N-linked (GlcNAc...) asparagine). The chain crosses the membrane as a helical span at residues 245 to 265; the sequence is IVLSTLSFICSIYNIITFGLL. Residues 266–275 lie on the Cytoplasmic side of the membrane; the sequence is SKLKSKYNLC. A helical transmembrane segment spans residues 276 to 296; that stretch reads ITFFSVSTVLMSLMDIVTYGI. Residues 297-314 are Extracellular-facing; that stretch reads GYEELLCPESGRYAIQSD. A helical membrane pass occupies residues 315-335; the sequence is VACGVTGAFFHIGITTGVLWW. The Cytoplasmic segment spans residues 336–356; sequence TTMSICLYSEVKRFKMISFRY. Residues 357–377 form a helical membrane-spanning segment; sequence IIIFNSVISLILLIIPLSGQA. At 378–398 the chain is on the extracellular side; that stretch reads FMSGNGSLGCWIRKTWYANGT. Residues N382 and N396 are each glycosylated (N-linked (GlcNAc...) asparagine). Residues 399 to 419 traverse the membrane as a helical segment; it reads FWIPCGISLFIGAICIVLVIY. Residues 420–440 lie on the Cytoplasmic side of the membrane; that stretch reads EIFKISRNLSKDNKPLMFQIR. The chain crosses the membrane as a helical span at residues 441-461; the sequence is PFLCVLLVGGSFLYLFIFYFN. Topologically, residues 462–496 are extracellular; sequence NERNLDKYKAAIPSYVQCLLSSDENGEDCLTDGPG. Residues 497 to 517 traverse the membrane as a helical segment; the sequence is FGAYFTFYFFTRLFGITSFSI. The Cytoplasmic portion of the chain corresponds to 518–635; sequence YGTSKIARDI…SSKDSNTNSF (118 aa). Positions 559 to 594 are enriched in polar residues; it reads SISGSNQKRFNRNGSNFNMKQNKSNPNDSISLSVVE. Positions 559-635 are disordered; it reads SISGSNQKRF…SSKDSNTNSF (77 aa). The stretch at 594–623 forms a coiled coil; that stretch reads ESTKKQDTENELESNIETKENRSTDISIEN. Residues 623–635 show a composition bias toward low complexity; that stretch reads NTTSSKDSNTNSF.

It belongs to the G-protein coupled receptor Fz/Smo family.

It localises to the membrane. The sequence is that of Frizzled and smoothened-like protein C (fslC) from Dictyostelium discoideum (Social amoeba).